The chain runs to 131 residues: Protein FAM107B (131 aa).

Position 2 is an N-acetylalanine (Ala2). 2 disordered regions span residues 39–78 and 100–131; these read MNQK…KKKS and KLQE…AQES. Lys50 is modified (N6-acetyllysine). A compositionally biased stretch (basic and acidic residues) spans 52–78; that stretch reads ELQKVMEKRKRDQVIKQKEEEAQKKKS. Residues 61–112 are a coiled coil; that stretch reads KRDQVIKQKEEEAQKKKSDLEIELLKRQQKLEQLELEKQKLQEEQENAPEFV.

This sequence belongs to the FAM107 family.

In Homo sapiens (Human), this protein is Protein FAM107B.